A 243-amino-acid polypeptide reads, in one-letter code: uncharacterized protein (243 aa).

The VWFA domain maps to 26–204 (RVGLVLDITG…ISDDELYDAL (179 aa)). A disordered region spans residues 222–243 (REQEPPAEKPKKKGFFSRLFSK). The span at 231–243 (PKKKGFFSRLFSK) shows a compositional bias: basic residues.

This is an uncharacterized protein from Bacillus subtilis (strain 168).